Reading from the N-terminus, the 44-residue chain is Photosystem I reaction center subunit IX (44 aa).

A helical transmembrane segment spans residues 7–27 (YLSVAPVLSTLWFGALAGLLI).

The protein belongs to the PsaJ family.

It is found in the plastid. The protein resides in the chloroplast thylakoid membrane. Its function is as follows. May help in the organization of the PsaE and PsaF subunits. This is Photosystem I reaction center subunit IX from Oryza nivara (Indian wild rice).